A 194-amino-acid chain; its full sequence is Fe/S biogenesis protein NfuA (194 aa).

2 residues coordinate [4Fe-4S] cluster: C152 and C155.

It belongs to the NfuA family. As to quaternary structure, homodimer. The cofactor is [4Fe-4S] cluster.

In terms of biological role, involved in iron-sulfur cluster biogenesis. Binds a 4Fe-4S cluster, can transfer this cluster to apoproteins, and thereby intervenes in the maturation of Fe/S proteins. Could also act as a scaffold/chaperone for damaged Fe/S proteins. In Ectopseudomonas mendocina (strain ymp) (Pseudomonas mendocina), this protein is Fe/S biogenesis protein NfuA.